The following is a 454-amino-acid chain: Glutamyl-tRNA reductase (454 aa).

Substrate-binding positions include T50–R53, S103, E108–Q110, and Q114. The Nucleophile role is filled by C51. G182–G187 is a binding site for NADP(+). A disordered region spans residues L407–G454. 2 stretches are compositionally biased toward basic and acidic residues: residues Q418 to I434 and V443 to G454.

This sequence belongs to the glutamyl-tRNA reductase family. Homodimer.

The enzyme catalyses (S)-4-amino-5-oxopentanoate + tRNA(Glu) + NADP(+) = L-glutamyl-tRNA(Glu) + NADPH + H(+). The protein operates within porphyrin-containing compound metabolism; protoporphyrin-IX biosynthesis; 5-aminolevulinate from L-glutamyl-tRNA(Glu): step 1/2. Functionally, catalyzes the NADPH-dependent reduction of glutamyl-tRNA(Glu) to glutamate 1-semialdehyde (GSA). The sequence is that of Glutamyl-tRNA reductase from Haloquadratum walsbyi (strain DSM 16790 / HBSQ001).